A 251-amino-acid polypeptide reads, in one-letter code: uncharacterized protein (251 aa).

An RING-type zinc finger spans residues 192-238 (CMMCVQRGDERVAITTPYTTDCGHTYCYACIMSRLKLVNNVSCPICK).

The protein resides in the cytoplasm. This is an uncharacterized protein from Schizosaccharomyces pombe (strain 972 / ATCC 24843) (Fission yeast).